The primary structure comprises 488 residues: N-succinylglutamate 5-semialdehyde dehydrogenase (488 aa).

Residue 221-226 (GSSRTG) coordinates NAD(+). Catalysis depends on residues E244 and C278.

Belongs to the aldehyde dehydrogenase family. AstD subfamily.

It carries out the reaction N-succinyl-L-glutamate 5-semialdehyde + NAD(+) + H2O = N-succinyl-L-glutamate + NADH + 2 H(+). It functions in the pathway amino-acid degradation; L-arginine degradation via AST pathway; L-glutamate and succinate from L-arginine: step 4/5. Functionally, catalyzes the NAD-dependent reduction of succinylglutamate semialdehyde into succinylglutamate. The chain is N-succinylglutamate 5-semialdehyde dehydrogenase from Pseudomonas fluorescens (strain Pf0-1).